We begin with the raw amino-acid sequence, 580 residues long: Viral transcription factor IE2 (580 aa).

Residues 1 to 11 (MESSAKRKMDP) show a composition bias toward basic and acidic residues. 2 disordered regions span residues 1 to 30 (MESS…TPVT) and 99 to 161 (DSSS…VIIK). Over residues 99–133 (DSSSTGPTLTTHSCSVSSAPLNKPTPTSVAVTNTP) the composition is skewed to polar residues. Glycyl lysine isopeptide (Lys-Gly) (interchain with G-Cter in SUMO) cross-links involve residues Lys175 and Lys180. An SUMO-interacting motif 1/SIM1 motif is present at residues 199-202 (CIVI). The non-covalent SUMO1 binding region (SIM) stretch occupies residues 200–208 (IVISDSEEE). Phosphoserine occurs at positions 203 and 205. The disordered stretch occupies residues 206–336 (EEEQGEEVET…SKRISELDNE (131 aa)). 3 stretches are compositionally biased toward low complexity: residues 216-236 (RGAT…TSPT), 259-271 (SSSS…SASD), and 302-317 (AASS…SSGG). The SUMO-interacting motif 1/SIM2 signature appears at 410–413 (IQII). The SUMO-interacting motif 1/SIM3 signature appears at 501 to 504 (VDLL).

This sequence belongs to the HHV-5 IE2 protein family. As to quaternary structure, interacts with host SUMO-modified form of TATA-binding protein (TBP)-associated factor 12/TAF12 in a SIM-dependent manner; this interaction increases the transactivation activity of IE2. Interacts with host CHAF1A. Interacts with several components of the host transcriptional machinery including TBP, TF2B and CREB1. Interacts with host DNA replication licensing factor MCM3. Interacts with host PLSCR1; this interaction inhibits IE2 transactivating activity. Post-translationally, phosphorylated by host CK2 at Ser-203 and Ser-205; leading to enhanced SUMOylation. In terms of processing, SUMOylated; SUMOylation is enhanced when IE2 is phosphorylated by host CK2. The sumoylation is necessary for efficient replication of the virus and thus for the function of this viral transcription factor.

It localises to the host nucleus. Functionally, stimulates viral early and late gene expression and thus play a crucial role in the regulation of productive infection. Selectively drives host RNA Pol II transcription initiation at a subset of viral early-late and late promoters without substantially affecting Pol II transcription of expressed host genes. Mechanistically, forms a repressive complex at the major immediate-early promoter region involving direct association with host nucleosomes and TBP. Concerning activation, stimulates transcription by binding nearby, but not within, core promoter regions. In addition, activates quiescent cells to reenter the cell cycle and up-regulates several E2F-responsive genes, which are responsible for pushing the cell into S phase. In S-phase, inhibits cellular DNA synthesis and blocks further cell cycle progression. This is Viral transcription factor IE2 (UL122) from Homo sapiens (Human).